The chain runs to 400 residues: MVDCGVDIYQLPVVPRACRSPRGRRLKIMRKQRSEFEVLAQVAGRFSGERKNRIVIGSLAHETKETKDDNVVVNNFLETMEVEVKPQPGLENLSQVLLSKDWLALGPSMPNSPITQEENFDSRSKIDSKRKVSHLKERGSCISQESQNMYPLKKRKLFYQNHSSESHDTPCTVKFGIKSLNISELLVDVPESATVGSLKLAVLEAVTQILKGGLNIGVLFQGKTIVDDSKTLLQIGIPYDDDDDENLGSLGFMLEPQKSETTTITTFTTVSPRTRLRQNQVLGSVDSTEAVAAKSVVPVRMKPAWQPEMVQRRIRRPFTVSEVEALVQAVERLGTGRWRDVKSHAFNHVNHRTYVDLKDKWKTLVHTAKISARQRRGEPVPQDLLDRVLAAHAFWSDRTG.

The 80-residue stretch at 173 to 252 (VKFGIKSLNI…DDENLGSLGF (80 aa)) folds into the Ubiquitin-like domain. In terms of domain architecture, HTH myb-type spans 310-369 (VQRRIRRPFTVSEVEALVQAVERLGTGRWRDVKSHAFNHVNHRTYVDLKDKWKTLVHTAK). The segment at residues 338–365 (WRDVKSHAFNHVNHRTYVDLKDKWKTLV) is a DNA-binding region (H-T-H motif).

As to quaternary structure, homodimer. As to expression, expressed ubiquitously.

Its subcellular location is the nucleus. Binds specifically to the plant telomeric double-stranded DNA sequences. At least 4 repeats of telomeric sequences are required for binding. This is Telomere repeat-binding protein 6 (TRP6) from Arabidopsis thaliana (Mouse-ear cress).